The primary structure comprises 362 residues: MSQTIDELLIPHRNAIDTIDAEILRLLNERAQHAHAIGELKGTGAVYRPEREVAVLRRIQDLNKGPLPDESVARLFREVMSECLAVERPLTIAYLGPQGTFTQQAAIKHFGHAAHTMACPTIDDCFKQVETRQADYLVAPVENSTEGSVGRTLDLLAVTALQACGEVVLRIHHNLLRKNNGSTEGIAKVFSHAQALAQCNDWLGRRLPNAERIAVSSNAEAARLVAESDDGTVAAIAGRTAAEIYGLDMVAECIEDEPNNTTRFLVMGHHETGASGSDKTSLAVSAPNRAGAVASLLQPLTESGISMTKFESRPSKSVLWEYLFFIDIEGHRRDAQIQTALERLGERASFVKAIGSYPTAVL.

One can recognise a Chorismate mutase domain in the interval 3–91 (QTIDELLIPH…ECLAVERPLT (89 aa)). Arg-13, Arg-30, Lys-41, and Glu-52 together coordinate substrate. One can recognise a Prephenate dehydratase domain in the interval 92-269 (IAYLGPQGTF…NTTRFLVMGH (178 aa)). Positions 281–356 (SLAVSAPNRA…RASFVKAIGS (76 aa)) constitute an ACT domain.

Its subcellular location is the cytoplasm. The catalysed reaction is chorismate = prephenate. It catalyses the reaction prephenate + H(+) = 3-phenylpyruvate + CO2 + H2O. It functions in the pathway amino-acid biosynthesis; L-phenylalanine biosynthesis; phenylpyruvate from prephenate: step 1/1. It participates in metabolic intermediate biosynthesis; prephenate biosynthesis; prephenate from chorismate: step 1/1. Functionally, catalyzes the Claisen rearrangement of chorismate to prephenate and the decarboxylation/dehydration of prephenate to phenylpyruvate. This Neisseria gonorrhoeae (strain ATCC 700825 / FA 1090) protein is Bifunctional chorismate mutase/prephenate dehydratase (pheA).